We begin with the raw amino-acid sequence, 217 residues long: Peptide methionine sulfoxide reductase MsrA 1 (217 aa).

C54 is an active-site residue.

Belongs to the MsrA Met sulfoxide reductase family.

The catalysed reaction is L-methionyl-[protein] + [thioredoxin]-disulfide + H2O = L-methionyl-(S)-S-oxide-[protein] + [thioredoxin]-dithiol. The enzyme catalyses [thioredoxin]-disulfide + L-methionine + H2O = L-methionine (S)-S-oxide + [thioredoxin]-dithiol. Its function is as follows. Has an important function as a repair enzyme for proteins that have been inactivated by oxidation. Catalyzes the reversible oxidation-reduction of methionine sulfoxide in proteins to methionine. In Caulobacter vibrioides (strain ATCC 19089 / CIP 103742 / CB 15) (Caulobacter crescentus), this protein is Peptide methionine sulfoxide reductase MsrA 1 (msrA1).